The chain runs to 469 residues: Probable monogalactosyldiacylglycerol synthase 2, chloroplastic (469 aa).

A chloroplast-targeting transit peptide spans M1 to G42.

The protein belongs to the glycosyltransferase 28 family.

The protein localises to the plastid. Its subcellular location is the chloroplast membrane. The catalysed reaction is a 1,2-diacyl-sn-glycerol + UDP-alpha-D-galactose = a 1,2-diacyl-3-O-(beta-D-galactosyl)-sn-glycerol + UDP + H(+). In terms of biological role, involved in the synthesis of the major structural component of photosynthetic membranes. The protein is Probable monogalactosyldiacylglycerol synthase 2, chloroplastic (MGD2) of Oryza sativa subsp. indica (Rice).